The following is a 248-amino-acid chain: 2,3-bisphosphoglycerate-dependent phosphoglycerate mutase (248 aa).

Substrate-binding positions include Arg-8–Asn-15, Thr-21–Gly-22, Arg-60, Glu-87–Tyr-90, Lys-98, and Arg-114–Arg-115. Residue His-9 is the Tele-phosphohistidine intermediate of the active site. Glu-87 functions as the Proton donor/acceptor in the catalytic mechanism. Residues Tyr-117 to Arg-137 form a disordered region. Residues Thr-127–Arg-137 show a composition bias toward basic and acidic residues. Gly-183–Asn-184 serves as a coordination point for substrate.

The protein belongs to the phosphoglycerate mutase family. BPG-dependent PGAM subfamily. Homodimer.

The enzyme catalyses (2R)-2-phosphoglycerate = (2R)-3-phosphoglycerate. It participates in carbohydrate degradation; glycolysis; pyruvate from D-glyceraldehyde 3-phosphate: step 3/5. Its function is as follows. Catalyzes the interconversion of 2-phosphoglycerate and 3-phosphoglycerate. This chain is 2,3-bisphosphoglycerate-dependent phosphoglycerate mutase, found in Cupriavidus taiwanensis (strain DSM 17343 / BCRC 17206 / CCUG 44338 / CIP 107171 / LMG 19424 / R1) (Ralstonia taiwanensis (strain LMG 19424)).